A 326-amino-acid polypeptide reads, in one-letter code: Vitamin B12 import system permease protein BtuC (326 aa).

9 helical membrane-spanning segments follow: residues 15-35 (WLLS…CAGE), 61-81 (LAVL…QALF), 88-108 (PGLL…VLLG), 112-132 (LPGW…TLIL), 146-166 (LLAG…AIYF), 184-204 (GGVD…LIWI), 240-260 (GWMV…GLVI), 274-294 (VLLP…DVVA), and 302-322 (ELPI…WLLL).

Belongs to the binding-protein-dependent transport system permease family. FecCD subfamily. As to quaternary structure, the complex is composed of two ATP-binding proteins (BtuD), two transmembrane proteins (BtuC) and a solute-binding protein (BtuF).

The protein resides in the cell inner membrane. Part of the ABC transporter complex BtuCDF involved in vitamin B12 import. Involved in the translocation of the substrate across the membrane. This chain is Vitamin B12 import system permease protein BtuC, found in Salmonella enteritidis PT4 (strain P125109).